Consider the following 323-residue polypeptide: Fructokinase-1 (323 aa).

The protein belongs to the carbohydrate kinase PfkB family. As to expression, expressed in stems, at higher levels in roots, and hardly detectable in leaves.

It carries out the reaction D-fructose + ATP = D-fructose 6-phosphate + ADP + H(+). Its pathway is glycan biosynthesis; starch biosynthesis. Inhibited at high fructose. Its function is as follows. May play an important role in maintaining the flux of carbon towards starch formation in endosperm. May also be involved in a sugar-sensing pathway. The polypeptide is Fructokinase-1 (FRK1) (Zea mays (Maize)).